The primary structure comprises 337 residues: tRNA N6-adenosine threonylcarbamoyltransferase (337 aa).

Residues histidine 114 and histidine 118 each coordinate Fe cation. Residues 136-140 (LVSGG), aspartate 169, glycine 182, aspartate 186, and asparagine 275 each bind substrate. Position 301 (aspartate 301) interacts with Fe cation.

It belongs to the KAE1 / TsaD family. Fe(2+) is required as a cofactor.

The protein localises to the cytoplasm. The catalysed reaction is L-threonylcarbamoyladenylate + adenosine(37) in tRNA = N(6)-L-threonylcarbamoyladenosine(37) in tRNA + AMP + H(+). Its function is as follows. Required for the formation of a threonylcarbamoyl group on adenosine at position 37 (t(6)A37) in tRNAs that read codons beginning with adenine. Is involved in the transfer of the threonylcarbamoyl moiety of threonylcarbamoyl-AMP (TC-AMP) to the N6 group of A37, together with TsaE and TsaB. TsaD likely plays a direct catalytic role in this reaction. The polypeptide is tRNA N6-adenosine threonylcarbamoyltransferase (Streptococcus uberis (strain ATCC BAA-854 / 0140J)).